Reading from the N-terminus, the 504-residue chain is uncharacterized protein (504 aa).

Positions 1-212 (MFMKSKAAGS…LYKTQDPVLD (212 aa)) are excised as a propeptide.

This is an uncharacterized protein from Deinococcus radiodurans (strain ATCC 13939 / DSM 20539 / JCM 16871 / CCUG 27074 / LMG 4051 / NBRC 15346 / NCIMB 9279 / VKM B-1422 / R1).